A 202-amino-acid chain; its full sequence is ATP-dependent Clp protease proteolytic subunit (202 aa).

Ser106 acts as the Nucleophile in catalysis. Residue His131 is part of the active site.

Belongs to the peptidase S14 family. In terms of assembly, fourteen ClpP subunits assemble into 2 heptameric rings which stack back to back to give a disk-like structure with a central cavity, resembling the structure of eukaryotic proteasomes.

It localises to the cytoplasm. The enzyme catalyses Hydrolysis of proteins to small peptides in the presence of ATP and magnesium. alpha-casein is the usual test substrate. In the absence of ATP, only oligopeptides shorter than five residues are hydrolyzed (such as succinyl-Leu-Tyr-|-NHMec, and Leu-Tyr-Leu-|-Tyr-Trp, in which cleavage of the -Tyr-|-Leu- and -Tyr-|-Trp bonds also occurs).. Its function is as follows. Cleaves peptides in various proteins in a process that requires ATP hydrolysis. Has a chymotrypsin-like activity. Plays a major role in the degradation of misfolded proteins. This chain is ATP-dependent Clp protease proteolytic subunit, found in Shewanella sp. (strain ANA-3).